We begin with the raw amino-acid sequence, 531 residues long: Zinc finger protein 703-B (531 aa).

The segment covering 1–10 (MNCSPPGSCT) has biased composition (polar residues). Disordered stretches follow at residues 1–28 (MNCS…ATLA), 88–249 (SQIG…VAPI), and 295–318 (VGNQ…LTGA). 2 stretches are compositionally biased toward low complexity: residues 19 to 28 (TPATPCATLA) and 113 to 122 (RSSSLKLGES). A compositionally biased stretch (polar residues) spans 171–180 (SPSSRVSSPG). Over residues 183 to 198 (CESKNNESQEKKEPEV) the composition is skewed to basic and acidic residues. The segment covering 199 to 215 (NKSSLETSQANPTLTRA) has biased composition (polar residues). Over residues 216–227 (SISNSSAESSQS) the composition is skewed to low complexity. The C2H2-type zinc finger occupies 404–432 (HICNWVSASGPCDKRFATSEELLAHLRTH).

The protein belongs to the Elbow/Noc family.

It is found in the nucleus. Its subcellular location is the cytoplasm. In terms of biological role, transcriptional corepressor which does not bind directly to DNA and may regulate transcription through recruitment of histone deacetylases to gene promoters. Regulates cell adhesion, migration and proliferation. Involved in specification of the lateral neural plate border (NPB). May be required for segmental gene expression during hindbrain development. This Xenopus laevis (African clawed frog) protein is Zinc finger protein 703-B (znf703-b).